Here is a 365-residue protein sequence, read N- to C-terminus: Phosphatidylcholine:ceramide cholinephosphotransferase 4 (365 aa).

At 1 to 44 (MISYPFFSLSPPGLVPPPMAVPPVEMYSGSFWNRMRKPLPLRTQ) the chain is on the cytoplasmic side. Residues 45–65 (VIRFTVVFVIVSFILAVALQI) form a helical membrane-spanning segment. The Lumenal segment spans residues 66 to 92 (THERMPDPKVTKPLPDLGFELLTKVPG). A helical membrane pass occupies residues 93–113 (MYVLADCCIGFLNILSVFTAF). Over 114-165 (KLYLLHRHCVGSGEPELPCNIPGVSRFFLSVWLCKENCRIELRNVHTIAWIR) the chain is Cytoplasmic. A helical transmembrane segment spans residues 166–186 (FITSYALLLLFRSVVIVMTSL). Over 187-229 (PAPDDLCQDPPKIENPVKNVILTVLTAGGGSIHCGDLMYSGHT) the chain is Lumenal. The active site involves H228. The chain crosses the membrane as a helical span at residues 230–250 (VILTLHLMFHWIYGAMVHWSF). A topological domain (cytoplasmic) is located at residue R251. Residues 252 to 272 (PVVTVVAIFGYYCIVASRFHY) traverse the membrane as a helical segment. Active-site residues include H271 and D275. Over 273–275 (TDD) the chain is Lumenal. Residues 276–296 (VLVAIYLTIATFIAVGHNADG) traverse the membrane as a helical segment. Over 297-365 (APWQLQLFIR…ALMFKCGAYV (69 aa)) the chain is Cytoplasmic.

Belongs to the sphingomyelin synthase family.

It is found in the golgi apparatus membrane. It carries out the reaction an N-acylsphing-4-enine + a 1,2-diacyl-sn-glycero-3-phosphocholine = a sphingomyelin + a 1,2-diacyl-sn-glycerol. Functionally, bidirectional lipid cholinephosphotransferase capable of converting phosphatidylcholine (PC) and ceramide to sphingomyelin (SM) and diacylglycerol (DAG) and vice versa. Direction is dependent on the relative concentrations of DAG and ceramide as phosphocholine acceptors. Directly and specifically recognizes the choline head group on the substrate. Also requires two fatty chains on the choline-P donor molecule in order to be recognized efficiently as a substrate. Does not function strictly as a SM synthase. Essential for viability of the pathogenic bloodstream stage of this human protozoan parasite and, consequently, can be considered as potential drug target. This chain is Phosphatidylcholine:ceramide cholinephosphotransferase 4, found in Trypanosoma brucei brucei (strain 927/4 GUTat10.1).